A 128-amino-acid chain; its full sequence is Aspartate 1-decarboxylase (128 aa).

The active-site Schiff-base intermediate with substrate; via pyruvic acid is the Ser-25. Position 25 is a pyruvic acid (Ser) (Ser-25). Thr-57 provides a ligand contact to substrate. The Proton donor role is filled by Tyr-58. Substrate is bound at residue 73 to 75 (GSA).

Belongs to the PanD family. In terms of assembly, heterooctamer of four alpha and four beta subunits. Requires pyruvate as cofactor. Post-translationally, is synthesized initially as an inactive proenzyme, which is activated by self-cleavage at a specific serine bond to produce a beta-subunit with a hydroxyl group at its C-terminus and an alpha-subunit with a pyruvoyl group at its N-terminus.

Its subcellular location is the cytoplasm. It carries out the reaction L-aspartate + H(+) = beta-alanine + CO2. It functions in the pathway cofactor biosynthesis; (R)-pantothenate biosynthesis; beta-alanine from L-aspartate: step 1/1. Functionally, catalyzes the pyruvoyl-dependent decarboxylation of aspartate to produce beta-alanine. In Burkholderia lata (strain ATCC 17760 / DSM 23089 / LMG 22485 / NCIMB 9086 / R18194 / 383), this protein is Aspartate 1-decarboxylase.